Consider the following 388-residue polypeptide: Succinate--CoA ligase [ADP-forming] subunit beta (388 aa).

The ATP-grasp domain occupies 9–245; the sequence is KALLKEYGMP…KSQENERELK (237 aa). ATP is bound by residues Lys-46, 53–55, Glu-100, Tyr-103, and Glu-108; that span reads GRG. The Mg(2+) site is built by Asn-200 and Asp-214. Substrate is bound by residues Asn-265 and 322 to 324; that span reads GIV.

It belongs to the succinate/malate CoA ligase beta subunit family. Heterotetramer of two alpha and two beta subunits. Mg(2+) serves as cofactor.

It carries out the reaction succinate + ATP + CoA = succinyl-CoA + ADP + phosphate. The enzyme catalyses GTP + succinate + CoA = succinyl-CoA + GDP + phosphate. Its pathway is carbohydrate metabolism; tricarboxylic acid cycle; succinate from succinyl-CoA (ligase route): step 1/1. Functionally, succinyl-CoA synthetase functions in the citric acid cycle (TCA), coupling the hydrolysis of succinyl-CoA to the synthesis of either ATP or GTP and thus represents the only step of substrate-level phosphorylation in the TCA. The beta subunit provides nucleotide specificity of the enzyme and binds the substrate succinate, while the binding sites for coenzyme A and phosphate are found in the alpha subunit. In Acinetobacter baumannii (strain AB307-0294), this protein is Succinate--CoA ligase [ADP-forming] subunit beta.